A 387-amino-acid polypeptide reads, in one-letter code: Xylose isomerase (387 aa).

Catalysis depends on residues histidine 54 and aspartate 57. Residues glutamate 181, glutamate 217, histidine 220, aspartate 245, aspartate 255, aspartate 257, and aspartate 287 each contribute to the Mg(2+) site.

The protein belongs to the xylose isomerase family. Homotetramer. Mg(2+) serves as cofactor.

Its subcellular location is the cytoplasm. The enzyme catalyses alpha-D-xylose = alpha-D-xylulofuranose. This is Xylose isomerase from Streptomyces coelicolor (strain ATCC BAA-471 / A3(2) / M145).